The primary structure comprises 388 residues: Succinate--CoA ligase [ADP-forming] subunit beta (388 aa).

The ATP-grasp domain occupies 9–244 (KQIFAKYKLP…PSQDDPREAL (236 aa)). ATP is bound by residues K46, 53–55 (GRG), E99, A102, and E107. Residues N199 and D213 each coordinate Mg(2+). Residues N264 and 321–323 (GIV) contribute to the substrate site.

This sequence belongs to the succinate/malate CoA ligase beta subunit family. In terms of assembly, heterotetramer of two alpha and two beta subunits. The cofactor is Mg(2+).

The enzyme catalyses succinate + ATP + CoA = succinyl-CoA + ADP + phosphate. The catalysed reaction is GTP + succinate + CoA = succinyl-CoA + GDP + phosphate. It functions in the pathway carbohydrate metabolism; tricarboxylic acid cycle; succinate from succinyl-CoA (ligase route): step 1/1. In terms of biological role, succinyl-CoA synthetase functions in the citric acid cycle (TCA), coupling the hydrolysis of succinyl-CoA to the synthesis of either ATP or GTP and thus represents the only step of substrate-level phosphorylation in the TCA. The beta subunit provides nucleotide specificity of the enzyme and binds the substrate succinate, while the binding sites for coenzyme A and phosphate are found in the alpha subunit. This is Succinate--CoA ligase [ADP-forming] subunit beta from Glaesserella parasuis serovar 5 (strain SH0165) (Haemophilus parasuis).